We begin with the raw amino-acid sequence, 102 residues long: Monothiol glutaredoxin-S1 (102 aa).

The region spanning 1-101 is the Glutaredoxin domain; sequence MEKISNLLED…SLLRRAGAIW (101 aa). Residue cysteine 21 coordinates [2Fe-2S] cluster.

This sequence belongs to the glutaredoxin family. CC-type subfamily.

The protein resides in the cytoplasm. Its function is as follows. May only reduce GSH-thiol disulfides, but not protein disulfides. This Arabidopsis thaliana (Mouse-ear cress) protein is Monothiol glutaredoxin-S1 (GRXS1).